We begin with the raw amino-acid sequence, 231 residues long: Peroxisomal membrane protein 11E (231 aa).

The Cytoplasmic segment spans residues 1–91; sequence MTTLDLTRAE…LPLVLLGKSK (91 aa). Residues 92 to 108 traverse the membrane as a helical segment; that stretch reads NALLSTFLFLDQIVWLG. Topologically, residues 109–202 are lumenal; sequence RSGIYKNKER…LLQLAPKTIS (94 aa). Residues 203–222 traverse the membrane as a helical segment; sequence PRVTGAFGFTTSLISCYQLL. At 223-231 the chain is on the cytoplasmic side; sequence PSRPKLKTP.

This sequence belongs to the peroxin-11 family. In terms of assembly, homooligomer. Interacts with ARC5 and FIS1B on peroxisomes. In terms of tissue distribution, expressed in leaves and developing siliques.

The protein resides in the peroxisome membrane. Functionally, involved in peroxisomal proliferation. Promotes peroxisomal duplication, aggregation or elongation without fission. The sequence is that of Peroxisomal membrane protein 11E (PEX11E) from Arabidopsis thaliana (Mouse-ear cress).